We begin with the raw amino-acid sequence, 236 residues long: Peroxisomal membrane protein PMP27 (236 aa).

The protein belongs to the peroxin-11 family. In terms of assembly, homooligomer. Interacts with PEX34.

Its subcellular location is the peroxisome membrane. In terms of biological role, involved in peroxisomal proliferation. Promotes peroxisome division and biogenesis. This is Peroxisomal membrane protein PMP27 (PEX11) from Saccharomyces cerevisiae (strain ATCC 204508 / S288c) (Baker's yeast).